The sequence spans 226 residues: V-type proton ATPase subunit E (226 aa).

It belongs to the V-ATPase E subunit family. V-ATPase is a heteromultimeric enzyme composed of a peripheral catalytic V1 complex (components A to H) attached to an integral membrane V0 proton pore complex (components: a, c, c', c'' and d).

Its function is as follows. Subunit of the peripheral V1 complex of vacuolar ATPase essential for assembly or catalytic function. V-ATPase is responsible for acidifying a variety of intracellular compartments in eukaryotic cells. The sequence is that of V-type proton ATPase subunit E (VATE) from Mesembryanthemum crystallinum (Common ice plant).